The sequence spans 350 residues: Histidinol-phosphate aminotransferase (350 aa).

The residue at position 209 (Lys209) is an N6-(pyridoxal phosphate)lysine.

Belongs to the class-II pyridoxal-phosphate-dependent aminotransferase family. Histidinol-phosphate aminotransferase subfamily. As to quaternary structure, homodimer. It depends on pyridoxal 5'-phosphate as a cofactor.

The enzyme catalyses L-histidinol phosphate + 2-oxoglutarate = 3-(imidazol-4-yl)-2-oxopropyl phosphate + L-glutamate. The protein operates within amino-acid biosynthesis; L-histidine biosynthesis; L-histidine from 5-phospho-alpha-D-ribose 1-diphosphate: step 7/9. The protein is Histidinol-phosphate aminotransferase of Geobacter sp. (strain M21).